The chain runs to 201 residues: Potassium-transporting ATPase KdpC subunit (201 aa).

A helical membrane pass occupies residues 10-30 (VVLVVLTVICGLAYPLAMTGI). Residues 67–105 (HGRPSATSAADPADPTKTVSSPYNAANSSGSNLGPTSKA) form a disordered region. Over residues 70-82 (PSATSAADPADPT) the composition is skewed to low complexity. Positions 83–105 (KTVSSPYNAANSSGSNLGPTSKA) are enriched in polar residues.

This sequence belongs to the KdpC family. As to quaternary structure, the system is composed of three essential subunits: KdpA, KdpB and KdpC.

The protein localises to the cell inner membrane. In terms of biological role, part of the high-affinity ATP-driven potassium transport (or Kdp) system, which catalyzes the hydrolysis of ATP coupled with the electrogenic transport of potassium into the cytoplasm. This subunit acts as a catalytic chaperone that increases the ATP-binding affinity of the ATP-hydrolyzing subunit KdpB by the formation of a transient KdpB/KdpC/ATP ternary complex. In Rhodopseudomonas palustris (strain BisB5), this protein is Potassium-transporting ATPase KdpC subunit.